Reading from the N-terminus, the 414-residue chain is Acyltransferase MYCGRDRAFT_85486 (414 aa).

A compositionally biased stretch (polar residues) spans 16-25 (DGTSTVTIRP). Positions 16–47 (DGTSTVTIRPTQKAAPSEEPSQDTAPSKKDSN) are disordered. Position 329 (histidine 329) interacts with substrate. Glutamate 367 (proton acceptor) is an active-site residue.

Belongs to the lysine N-acyltransferase mbtK family.

It functions in the pathway siderophore biosynthesis. In terms of biological role, acyltransferase; part of the gene cluster 14 that mediates the biosynthesis of a ferrichrome A-like siderophore which may contribute to organismal virulence. The first step of siderophore biosynthesis is performed by the HMG-CoA synthase (HMGS) MYCGRDRAFT_54740 which catalyzes the generation of HMG-CoA and CoA using acetoacetyl-CoA and acetyl-CoA as substrates. The enoyl-CoA isomerase/hydratase MYCGRDRAFT_76805 then catalyzes the conversion of HMG-CoA to methylglutaconyl-CoA. The acyltransferase MYCGRDRAFT_85486 then fuses methylglutaconyl-CoA with hydroxyornithine to yield methylglutaconyl hydroxyornithine. Methylglutaconyl hydroxyornithine is then available for use by the nonribosomal peptide synthetase NRPS2 to generate the ferrichrome A-like siderophore. This chain is Acyltransferase MYCGRDRAFT_85486, found in Zymoseptoria tritici (strain CBS 115943 / IPO323) (Speckled leaf blotch fungus).